The sequence spans 166 residues: UPF0260 protein GbCGDNIH1_2046 (166 aa).

Positions 147–166 (RFPRPRRPRQEPAGKTADES) are disordered. Residues 154-166 (PRQEPAGKTADES) show a composition bias toward basic and acidic residues.

This sequence belongs to the UPF0260 family.

The chain is UPF0260 protein GbCGDNIH1_2046 from Granulibacter bethesdensis (strain ATCC BAA-1260 / CGDNIH1).